We begin with the raw amino-acid sequence, 277 residues long: Transcription factor WRKY19 (277 aa).

Residues 100 to 168 (QDTASLDDGL…YLGDHTCGQA (69 aa)) constitute a DNA-binding region (WRKY).

The protein belongs to the WRKY group III family.

It localises to the nucleus. In terms of biological role, may play a role in defense responses. In Oryza sativa subsp. japonica (Rice), this protein is Transcription factor WRKY19.